The primary structure comprises 146 residues: 3-hydroxyacyl-[acyl-carrier-protein] dehydratase FabZ (146 aa).

The active site involves H48.

It belongs to the thioester dehydratase family. FabZ subfamily.

It localises to the cytoplasm. It carries out the reaction a (3R)-hydroxyacyl-[ACP] = a (2E)-enoyl-[ACP] + H2O. Its function is as follows. Involved in unsaturated fatty acids biosynthesis. Catalyzes the dehydration of short chain beta-hydroxyacyl-ACPs and long chain saturated and unsaturated beta-hydroxyacyl-ACPs. This is 3-hydroxyacyl-[acyl-carrier-protein] dehydratase FabZ from Campylobacter jejuni subsp. jejuni serotype O:6 (strain 81116 / NCTC 11828).